We begin with the raw amino-acid sequence, 183 residues long: Potassium-transporting ATPase KdpC subunit (183 aa).

Residues 11 to 31 (LALLMTLLTGVLYPLAVTGVA) traverse the membrane as a helical segment.

This sequence belongs to the KdpC family. In terms of assembly, the system is composed of three essential subunits: KdpA, KdpB and KdpC.

Its subcellular location is the cell inner membrane. Its function is as follows. Part of the high-affinity ATP-driven potassium transport (or Kdp) system, which catalyzes the hydrolysis of ATP coupled with the electrogenic transport of potassium into the cytoplasm. This subunit acts as a catalytic chaperone that increases the ATP-binding affinity of the ATP-hydrolyzing subunit KdpB by the formation of a transient KdpB/KdpC/ATP ternary complex. The protein is Potassium-transporting ATPase KdpC subunit of Pseudomonas putida (strain GB-1).